A 345-amino-acid polypeptide reads, in one-letter code: CRISPR-associated endonuclease Cas1 1 (345 aa).

A divalent metal cation-binding residues include glutamate 168, histidine 239, and glutamate 254.

It belongs to the CRISPR-associated endonuclease Cas1 family. Forms a heterotetramer with a Cas2 homodimer. Homodimer. A divalent metal cation is required as a cofactor.

CRISPR (clustered regularly interspaced short palindromic repeat), is an adaptive immune system that provides protection against mobile genetic elements (viruses, transposable elements and conjugative plasmids). CRISPR clusters contain sequences complementary to antecedent mobile elements and target invading nucleic acids. CRISPR clusters are transcribed and processed into CRISPR RNA (crRNA). Involved in the integration of spacer DNA into the CRISPR cassette. Acts as a dsDNA and ssRNA nuclease, binds to linear and circular dsDNA and linear ssRNA and ssDNA. The protein is CRISPR-associated endonuclease Cas1 1 of Archaeoglobus fulgidus (strain ATCC 49558 / DSM 4304 / JCM 9628 / NBRC 100126 / VC-16).